A 453-amino-acid polypeptide reads, in one-letter code: Homogentisate 1,2-dioxygenase (453 aa).

The active-site Proton acceptor is His-306. 2 residues coordinate Fe cation: His-349 and Glu-355. Homogentisate is bound by residues Tyr-364 and His-385. Residue His-385 participates in Fe cation binding.

This sequence belongs to the homogentisate dioxygenase family. Hexamer; dimer of trimers. Fe cation serves as cofactor.

The enzyme catalyses homogentisate + O2 = 4-maleylacetoacetate + H(+). It participates in amino-acid degradation; L-phenylalanine degradation; acetoacetate and fumarate from L-phenylalanine: step 4/6. Involved in the catabolism of homogentisate (2,5-dihydroxyphenylacetate or 2,5-OH-PhAc), a central intermediate in the degradation of phenylalanine and tyrosine. Catalyzes the oxidative ring cleavage of the aromatic ring of homogentisate to yield maleylacetoacetate. This is Homogentisate 1,2-dioxygenase from Rhizobium leguminosarum bv. trifolii (strain WSM2304).